A 490-amino-acid chain; its full sequence is Cytochrome P450 2C54 (490 aa).

Serine 127 bears the Phosphoserine mark. Residues lysine 252 and lysine 375 each carry the N6-acetyllysine modification. Heme is bound at residue cysteine 435.

This sequence belongs to the cytochrome P450 family. The cofactor is heme. As to expression, expressed in liver.

The protein resides in the endoplasmic reticulum membrane. It is found in the microsome membrane. It catalyses the reaction an organic molecule + reduced [NADPH--hemoprotein reductase] + O2 = an alcohol + oxidized [NADPH--hemoprotein reductase] + H2O + H(+). Metabolizes arachidonic acid mainly to 12-hydroxyeicosatetraenoic acid (HETE). This chain is Cytochrome P450 2C54, found in Mus musculus (Mouse).